The chain runs to 193 residues: Ion-translocating oxidoreductase complex subunit A (193 aa).

Helical transmembrane passes span 5–25 (LLLF…FLGL), 47–67 (FVMT…LVPL), 72–92 (LRTL…EMVV), 102–122 (LLGI…VALL), 134–154 (AVYG…FAAI), and 171–191 (SIAL…TGLV).

This sequence belongs to the NqrDE/RnfAE family. As to quaternary structure, the complex is composed of six subunits: RnfA, RnfB, RnfC, RnfD, RnfE and RnfG.

It localises to the cell inner membrane. In terms of biological role, part of a membrane-bound complex that couples electron transfer with translocation of ions across the membrane. The sequence is that of Ion-translocating oxidoreductase complex subunit A from Serratia proteamaculans (strain 568).